The primary structure comprises 57 residues: MAVPFRRTSKAKKRKRRTHVKLQLPGMNECSNCGEYRLSHHVCPECGQYDGKEVANS.

This sequence belongs to the bacterial ribosomal protein bL32 family.

The chain is Large ribosomal subunit protein bL32B from Listeria welshimeri serovar 6b (strain ATCC 35897 / DSM 20650 / CCUG 15529 / CIP 8149 / NCTC 11857 / SLCC 5334 / V8).